Reading from the N-terminus, the 305-residue chain is Formamidopyrimidine-DNA glycosylase (305 aa).

The active-site Schiff-base intermediate with DNA is proline 2. Glutamate 3 serves as the catalytic Proton donor. Lysine 59 (proton donor; for beta-elimination activity) is an active-site residue. DNA is bound by residues histidine 92, arginine 111, and arginine 154. An FPG-type zinc finger spans residues glutamine 239–proline 273. Arginine 263 functions as the Proton donor; for delta-elimination activity in the catalytic mechanism. The interval proline 282–glutamate 305 is disordered.

Belongs to the FPG family. As to quaternary structure, monomer. The cofactor is Zn(2+).

It carries out the reaction Hydrolysis of DNA containing ring-opened 7-methylguanine residues, releasing 2,6-diamino-4-hydroxy-5-(N-methyl)formamidopyrimidine.. It catalyses the reaction 2'-deoxyribonucleotide-(2'-deoxyribose 5'-phosphate)-2'-deoxyribonucleotide-DNA = a 3'-end 2'-deoxyribonucleotide-(2,3-dehydro-2,3-deoxyribose 5'-phosphate)-DNA + a 5'-end 5'-phospho-2'-deoxyribonucleoside-DNA + H(+). Its function is as follows. Involved in base excision repair of DNA damaged by oxidation or by mutagenic agents. Acts as a DNA glycosylase that recognizes and removes damaged bases. Has a preference for oxidized purines, such as 7,8-dihydro-8-oxoguanine (8-oxoG). Has AP (apurinic/apyrimidinic) lyase activity and introduces nicks in the DNA strand. Cleaves the DNA backbone by beta-delta elimination to generate a single-strand break at the site of the removed base with both 3'- and 5'-phosphates. The protein is Formamidopyrimidine-DNA glycosylase of Symbiobacterium thermophilum (strain DSM 24528 / JCM 14929 / IAM 14863 / T).